Consider the following 517-residue polypeptide: Alpha-amylase (517 aa).

The signal sequence occupies residues 1–21 (MAHLLLAVVAITLALSQSVFG). A disulfide bridge links C52 with C108. Ca(2+) contacts are provided by N122, R178, and D187. R215 contacts chloride. Catalysis depends on D217, which acts as the Nucleophile. H221 is a binding site for Ca(2+). E253 (proton donor) is an active-site residue. Position 355 (R355) interacts with chloride. 2 disulfide bridges follow: C397-C403 and C470-C482.

The protein belongs to the glycosyl hydrolase 13 family. In terms of assembly, monomer. Ca(2+) serves as cofactor. It depends on chloride as a cofactor.

The protein resides in the secreted. The enzyme catalyses Endohydrolysis of (1-&gt;4)-alpha-D-glucosidic linkages in polysaccharides containing three or more (1-&gt;4)-alpha-linked D-glucose units.. With respect to regulation, activated by chloride ions. Inhibited by acarbose. Not inhibited by wheat alpha-amylase inhibitors 1 (WI-1, the tetrameric form) or 3 (WI-3, the monomeric form) and bean alpha-amylase inhibitor 1 (alphaAI-1). This chain is Alpha-amylase, found in Acarus siro (Flour mite).